The sequence spans 59 residues: Small, acid-soluble spore protein H (59 aa).

The protein belongs to the SspH family.

It localises to the spore core. The polypeptide is Small, acid-soluble spore protein H (Bacillus thuringiensis subsp. konkukian (strain 97-27)).